A 56-amino-acid polypeptide reads, in one-letter code: Large ribosomal subunit protein bL33C (56 aa).

It belongs to the bacterial ribosomal protein bL33 family.

This Sorangium cellulosum (strain So ce56) (Polyangium cellulosum (strain So ce56)) protein is Large ribosomal subunit protein bL33C.